The chain runs to 831 residues: Thymine dioxygenase JBP1-B (831 aa).

Residues 80–282 (VVGGVLLPGA…RLTCVCYYRA (203 aa)) form a thymine dioxygenase region. Fe cation-binding residues include His-207, Asp-209, and His-257. A 2-oxoglutarate-binding site is contributed by Arg-273. The tract at residues 409 to 578 (LGGALKAAEE…IEEARRRGNA (170 aa)) is DNA-binding JBP1 domain.

This sequence belongs to the TET family. JBP1 subfamily. As to quaternary structure, monomer. Binds to DNA as a monomer. Fe(2+) serves as cofactor.

It is found in the nucleus. The enzyme catalyses thymine + 2-oxoglutarate + O2 = 5-hydroxymethyluracil + succinate + CO2. In terms of biological role, dioxygenase that catalyzes the first step of DNA base J (beta-d-glucosyl-HOMedU) biosynthesis by converting thymine to 5-hydroxymethyluracil (HOMedU). DNA base J is a hypermodified thymidine residue found in the genome of kinetoplastid parasites, which is localized primarily to repetitive DNA, namely the telomeres, and is implicated in the regulation of antigenic variation. Also specifically binds to base J-containing DNA (J-DNA). Involved in propagation and maintenance of DNA base J synthesis initiated by JBP2 by specifically binding already synthesized DNA base J and propagating J synthesis. Thymine dioxygenase activity and J-DNA-binding are independent functions. This Trypanosoma cruzi (strain CL Brener) protein is Thymine dioxygenase JBP1-B (JBP1B).